The chain runs to 369 residues: 2-aminoethylphosphonate--pyruvate transaminase 1 (369 aa).

Lysine 191 bears the N6-(pyridoxal phosphate)lysine mark.

The protein belongs to the class-V pyridoxal-phosphate-dependent aminotransferase family. PhnW subfamily. In terms of assembly, homodimer. Requires pyridoxal 5'-phosphate as cofactor.

It catalyses the reaction (2-aminoethyl)phosphonate + pyruvate = phosphonoacetaldehyde + L-alanine. Involved in phosphonate degradation. In Burkholderia lata (strain ATCC 17760 / DSM 23089 / LMG 22485 / NCIMB 9086 / R18194 / 383), this protein is 2-aminoethylphosphonate--pyruvate transaminase 1.